A 157-amino-acid polypeptide reads, in one-letter code: Polyferredoxin protein VhcB (157 aa).

4Fe-4S ferredoxin-type domains lie at 23–52 (NGISWDREKCEYCGPCAIKCPNDAIMVVNP), 62–92 (KTERANEFKMCDLCGTCVSACPTEALQMGKI), and 100–129 (DRIEFTPSLCDSCGACVEICPQNVLKLNEE). Residues Cys-32, Cys-35, Cys-38, Cys-42, Cys-72, Cys-75, Cys-78, Cys-82, Cys-109, Cys-112, Cys-115, Cys-119, Cys-136, Cys-139, Cys-142, and Cys-146 each contribute to the [4Fe-4S] cluster site.

Requires [4Fe-4S] cluster as cofactor.

The protein is Polyferredoxin protein VhcB (vhcB) of Methanococcus voltae.